The following is a 348-amino-acid chain: NADH-quinone oxidoreductase subunit H (348 aa).

A run of 8 helical transmembrane segments spans residues 10-30 (LPLF…LVLI), 82-102 (GVFL…WAVV), 115-135 (VGLL…IMGG), 161-181 (IGFV…TTIV), 199-219 (LLDW…ISAL), 251-271 (LFFL…TILF), 287-307 (VPGV…FAMV), and 322-342 (LGWK…AAIL).

This sequence belongs to the complex I subunit 1 family. In terms of assembly, NDH-1 is composed of 14 different subunits. Subunits NuoA, H, J, K, L, M, N constitute the membrane sector of the complex.

It localises to the cell inner membrane. It carries out the reaction a quinone + NADH + 5 H(+)(in) = a quinol + NAD(+) + 4 H(+)(out). Functionally, NDH-1 shuttles electrons from NADH, via FMN and iron-sulfur (Fe-S) centers, to quinones in the respiratory chain. The immediate electron acceptor for the enzyme in this species is believed to be ubiquinone. Couples the redox reaction to proton translocation (for every two electrons transferred, four hydrogen ions are translocated across the cytoplasmic membrane), and thus conserves the redox energy in a proton gradient. This subunit may bind ubiquinone. The protein is NADH-quinone oxidoreductase subunit H of Bartonella bacilliformis (strain ATCC 35685 / KC583 / Herrer 020/F12,63).